The chain runs to 372 residues: tRNA N6-adenosine threonylcarbamoyltransferase (372 aa).

3 residues coordinate a divalent metal cation: His-133, His-137, and Tyr-154. Residues 154-158 (YVSGG), Asp-186, Gly-201, Glu-205, and Asn-301 contribute to the substrate site. A divalent metal cation is bound at residue Asp-330.

Belongs to the KAE1 / TsaD family. As to quaternary structure, component of the EKC/KEOPS complex composed of at least BUD32, CGI121, GON7, KAE1 and PCC1; the whole complex dimerizes. It depends on a divalent metal cation as a cofactor.

It is found in the cytoplasm. The protein resides in the nucleus. It carries out the reaction L-threonylcarbamoyladenylate + adenosine(37) in tRNA = N(6)-L-threonylcarbamoyladenosine(37) in tRNA + AMP + H(+). Functionally, component of the EKC/KEOPS complex that is required for the formation of a threonylcarbamoyl group on adenosine at position 37 (t(6)A37) in tRNAs that read codons beginning with adenine. The complex is probably involved in the transfer of the threonylcarbamoyl moiety of threonylcarbamoyl-AMP (TC-AMP) to the N6 group of A37. KAE1 likely plays a direct catalytic role in this reaction, but requires other protein(s) of the complex to fulfill this activity. The EKC/KEOPS complex also promotes both telomere uncapping and telomere elongation. The complex is required for efficient recruitment of transcriptional coactivators. This Candida albicans (strain SC5314 / ATCC MYA-2876) (Yeast) protein is tRNA N6-adenosine threonylcarbamoyltransferase.